The chain runs to 153 residues: Regulator of sigma D (153 aa).

Belongs to the Rsd/AlgQ family. Interacts with RpoD.

The protein resides in the cytoplasm. Binds RpoD and negatively regulates RpoD-mediated transcription activation by preventing the interaction between the primary sigma factor RpoD with the catalytic core of the RNA polymerase and with promoter DNA. May be involved in replacement of the RNA polymerase sigma subunit from RpoD to RpoS during the transition from exponential growth to the stationary phase. The chain is Regulator of sigma D from Pectobacterium carotovorum subsp. carotovorum (strain PC1).